The following is a 441-amino-acid chain: Mitochondrial distribution and morphology protein 12 (441 aa).

An SMP-LTD domain is found at 1–441 (MSIDIDWERA…VYPSFWTFLV (441 aa)). 2 disordered regions span residues 70–89 (YEDGDEDLSVSSEEQSPMRE) and 180–289 (TPLR…RMRE). Composition is skewed to polar residues over residues 226–245 (SRPSTVNTGNTLFSRGSVST) and 253–263 (SSQTVLANNPG).

Belongs to the MDM12 family. As to quaternary structure, component of the ER-mitochondria encounter structure (ERMES) or MDM complex, composed of MMM1, MDM10, MDM12 and MDM34. An MMM1 homodimer associates with one molecule of MDM12 on each side in a pairwise head-to-tail manner, and the SMP-LTD domains of MMM1 and MDM12 generate a continuous hydrophobic tunnel for phospholipid trafficking.

Its subcellular location is the mitochondrion outer membrane. The protein localises to the endoplasmic reticulum membrane. In terms of biological role, component of the ERMES/MDM complex, which serves as a molecular tether to connect the endoplasmic reticulum (ER) and mitochondria. Components of this complex are involved in the control of mitochondrial shape and protein biogenesis, and function in nonvesicular lipid trafficking between the ER and mitochondria. MDM12 is required for the interaction of the ER-resident membrane protein MMM1 and the outer mitochondrial membrane-resident beta-barrel protein MDM10. The MDM12-MMM1 subcomplex functions in the major beta-barrel assembly pathway that is responsible for biogenesis of all mitochondrial outer membrane beta-barrel proteins, and acts in a late step after the SAM complex. The MDM10-MDM12-MMM1 subcomplex further acts in the TOM40-specific pathway after the action of the MDM12-MMM1 complex. Essential for establishing and maintaining the structure of mitochondria and maintenance of mtDNA nucleoids. The sequence is that of Mitochondrial distribution and morphology protein 12 from Paracoccidioides brasiliensis (strain Pb03).